Consider the following 113-residue polypeptide: MHEMSLAEGVLQLIEDAARKDHFAKVTTVWLEIGQLSGVEPEAMVFCFDAVTRDSVAQGARLEIMTLPGTAWCMACAETVPMAEVFGQCPQCGGYQLQVTGGTEMRVKELEVE.

Ni(2+) is bound at residue H2. Zn(2+) is bound by residues C73, C76, C89, and C92.

It belongs to the HypA/HybF family.

Involved in the maturation of [NiFe] hydrogenases. Required for nickel insertion into the metal center of the hydrogenase. In Albidiferax ferrireducens (strain ATCC BAA-621 / DSM 15236 / T118) (Rhodoferax ferrireducens), this protein is Hydrogenase maturation factor HypA.